We begin with the raw amino-acid sequence, 22 residues long: Heat shock 70-related protein 1, mitochondrial (22 aa).

The protein belongs to the heat shock protein 70 family.

The protein resides in the mitochondrion. The sequence is that of Heat shock 70-related protein 1, mitochondrial from Leishmania tarentolae (Sauroleishmania tarentolae).